The chain runs to 64 residues: Alpha-conotoxin-like Ai1.2 (64 aa).

Positions 1–17 (MFTVFLLVVLATTVVSS) are cleaved as a signal peptide. The propeptide occupies 18–43 (TSGRRAFRGRNAAAKASGLVGLTDRR). Disulfide bonds link Cys46/Cys52 and Cys47/Cys60. Residues 48–50 (SDP) form a ser-Xaa-Pro motif, crucial for potent interaction with nAChR region. Residue Gly61 is modified to Glycine amide.

The protein belongs to the conotoxin A superfamily. Expressed by the venom duct.

It localises to the secreted. In terms of biological role, alpha-conotoxins act on postsynaptic membranes, they bind to the nicotinic acetylcholine receptors (nAChR) and thus inhibit them. The chain is Alpha-conotoxin-like Ai1.2 from Conus ammiralis (Admiral cone).